The primary structure comprises 152 residues: Deoxyuridine 5'-triphosphate nucleotidohydrolase (152 aa).

Residues 71-73 (RSG), Asn84, 88-90 (LID), and Met98 contribute to the substrate site.

It belongs to the dUTPase family. Mg(2+) is required as a cofactor.

The catalysed reaction is dUTP + H2O = dUMP + diphosphate + H(+). Its pathway is pyrimidine metabolism; dUMP biosynthesis; dUMP from dCTP (dUTP route): step 2/2. In terms of biological role, this enzyme is involved in nucleotide metabolism: it produces dUMP, the immediate precursor of thymidine nucleotides and it decreases the intracellular concentration of dUTP so that uracil cannot be incorporated into DNA. The polypeptide is Deoxyuridine 5'-triphosphate nucleotidohydrolase (Coxiella burnetii (strain Dugway 5J108-111)).